The chain runs to 181 residues: Bifunctional protein PyrR (181 aa).

Substrate contacts are provided by residues 39 to 40, 104 to 112, R137, and V161; these read RR and DDVLYTGRT. A PRPP-binding motif is present at residues 100 to 112; that stretch reads VILVDDVLYTGRT.

This sequence belongs to the purine/pyrimidine phosphoribosyltransferase family. PyrR subfamily.

It catalyses the reaction UMP + diphosphate = 5-phospho-alpha-D-ribose 1-diphosphate + uracil. Its function is as follows. Regulates the transcription of the pyrimidine nucleotide (pyr) operon in response to exogenous pyrimidines. Functionally, also displays a weak uracil phosphoribosyltransferase activity which is not physiologically significant. The protein is Bifunctional protein PyrR of Pasteurella multocida (strain Pm70).